The sequence spans 199 residues: 5'-deoxynucleotidase KPK_1466 (199 aa).

Residues 18–19 (RW) and His-33 contribute to the substrate site. Residues 30-142 (VSEHSLQVAM…VKQADALCAY (113 aa)) enclose the HD domain. His-33, His-68, and Asp-69 together coordinate a divalent metal cation. Substrate-binding positions include Asp-69, 77-80 (DLPT), and Asp-137. A divalent metal cation is bound at residue Asp-137.

This sequence belongs to the 5DNU family. In terms of assembly, homodimer. The cofactor is a divalent metal cation.

It is found in the cytoplasm. It catalyses the reaction a 2'-deoxyribonucleoside 5'-phosphate + H2O = a 2'-deoxyribonucleoside + phosphate. In terms of biological role, catalyzes the strictly specific dephosphorylation of 2'-deoxyribonucleoside 5'-monophosphates. In Klebsiella pneumoniae (strain 342), this protein is 5'-deoxynucleotidase KPK_1466.